We begin with the raw amino-acid sequence, 560 residues long: Protein tweety homolog 3 (560 aa).

Residues Met1 to Ala43 are Extracellular-facing. A helical transmembrane segment spans residues Val44 to Phe64. At Tyr65–Thr87 the chain is on the cytoplasmic side. Residues Ala88 to Gly108 form a helical membrane-spanning segment. Residues Asn109 to Leu212 are Extracellular-facing. Ca(2+) is bound by residues Glu111 and Asp114. Residues Asn127 and Asn145 are each glycosylated (N-linked (GlcNAc...) asparagine). A helical membrane pass occupies residues Gly213–Ile233. Topologically, residues Arg234–Ser238 are cytoplasmic. A helical membrane pass occupies residues Ile239 to Gly259. The Extracellular portion of the chain corresponds to Leu260–Glu387. 2 disulfides stabilise this stretch: Cys272-Cys382 and Cys300-Cys367. A glycan (N-linked (GlcNAc...) asparagine) is linked at Asn352. Residues Gly388 to Cys408 form a helical membrane-spanning segment. Topologically, residues Ser409–His560 are cytoplasmic. Disordered regions lie at residues Gln415–Ala435 and Thr486–His560. Residues Thr539–Asn549 are compositionally biased toward polar residues.

This sequence belongs to the tweety family. As to quaternary structure, homotetramer; disulfide-linked. Forms cis-homodimers in the presence of Ca(2+).

Its subcellular location is the cell membrane. The enzyme catalyses chloride(in) = chloride(out). It carries out the reaction L-glutamate(out) = L-glutamate(in). Its function is as follows. May act as a calcium-independent, swelling-dependent volume-regulated anion channel (VRAC-swell) which plays a pivotal role in the process of regulatory volume decrease (RVD) in the brain through the efflux of anions like chloride and organic osmolytes like glutamate. Probable large-conductance Ca(2+)-activated chloride channel. The protein is Protein tweety homolog 3 (ttyh3b) of Danio rerio (Zebrafish).